The primary structure comprises 82 residues: MFHTKQSEEGCSPLMPNLAAAVPCRPFVNLARETGTTNLLVAGSRPTNTGVRNFVINLTVGESSSSRRTANRILLRSFTSLL.

This is an uncharacterized protein from Human herpesvirus 6A (strain Uganda-1102) (HHV-6 variant A).